We begin with the raw amino-acid sequence, 710 residues long: Ephexin-1 (710 aa).

2 stretches are compositionally biased toward basic and acidic residues: residues 1–11 (METRESEDLEK) and 26–41 (EPAK…KEET). The tract at residues 1 to 143 (METRESEDLE…PGNGATPEEW (143 aa)) is disordered. The segment at 1–273 (METRESEDLE…LEILQPEEIK (273 aa)) is regulatory region; modulates activity toward RHOA, RAC1 and CDC42. Composition is skewed to polar residues over residues 89–102 (ADSQ…NEPL) and 127–136 (MSESSSTPGN). Tyr179 bears the Phosphotyrosine mark. Residues 194–236 (RRQQDAEIEDNTNGSPASEDTPEEEEEEEEEEEPASPPERKTL) form a disordered region. The segment covering 213–227 (DTPEEEEEEEEEEEP) has biased composition (acidic residues). The region spanning 273-457 (KLQEAMFELV…EMVVKACNEG (185 aa)) is the DH domain. In terms of domain architecture, PH spans 489–601 (WLLKQGELQQ…WMTSLAPNRR (113 aa)). Residues 612–673 (LDCPQVQCVH…PSSMTEEILN (62 aa)) form the SH3 domain. The span at 687 to 699 (VHKMDDPQRSQNK) shows a compositional bias: basic and acidic residues. The interval 687–710 (VHKMDDPQRSQNKDRRKLGSRNRQ) is disordered. The segment covering 700–710 (DRRKLGSRNRQ) has biased composition (basic residues).

As to quaternary structure, interacts with CDK5R1 and EPHA4; activated by EPHA4 through the CDK5 kinase. In terms of processing, src-dependent phosphorylation at Tyr-179 upon EPHA4 activation increases the guanine exchange factor activity toward RHOA. Phosphorylation by CDK5 upon EPHA4 activation by EFNA1 may regulate dendritic spine morphogenesis. As to expression, highly expressed in brain specifically in caudate nucleus and to a lower extent in amygdala and hippocampus. Also detected in lung.

Its subcellular location is the cytoplasm. It localises to the membrane. The protein localises to the cell projection. It is found in the growth cone. Acts as a guanine nucleotide exchange factor (GEF) which differentially activates the GTPases RHOA, RAC1 and CDC42. Plays a role in axon guidance regulating ephrin-induced growth cone collapse and dendritic spine morphogenesis. Upon activation by ephrin through EPHA4, the GEF activity switches toward RHOA resulting in its activation. Activated RHOA promotes cone retraction at the expense of RAC1- and CDC42-stimulated growth cone extension. The polypeptide is Ephexin-1 (NGEF) (Homo sapiens (Human)).